The chain runs to 125 residues: Prefoldin subunit beta (125 aa).

This sequence belongs to the prefoldin subunit beta family. As to quaternary structure, heterohexamer of two alpha and four beta subunits.

The protein localises to the cytoplasm. Molecular chaperone capable of stabilizing a range of proteins. Seems to fulfill an ATP-independent, HSP70-like function in archaeal de novo protein folding. This is Prefoldin subunit beta from Halobacterium salinarum (strain ATCC 29341 / DSM 671 / R1).